We begin with the raw amino-acid sequence, 252 residues long: Probable transcriptional regulatory protein A1C_04175 (252 aa).

This sequence belongs to the TACO1 family.

The protein localises to the cytoplasm. This Rickettsia akari (strain Hartford) protein is Probable transcriptional regulatory protein A1C_04175.